The chain runs to 326 residues: tRNA-modifying protein YgfZ (326 aa).

Residues Trp-27 and Trp-189 each contribute to the folate site.

The protein belongs to the tRNA-modifying YgfZ family.

It localises to the cytoplasm. Functionally, folate-binding protein involved in regulating the level of ATP-DnaA and in the modification of some tRNAs. It is probably a key factor in regulatory networks that act via tRNA modification, such as initiation of chromosomal replication. The polypeptide is tRNA-modifying protein YgfZ (Salmonella schwarzengrund (strain CVM19633)).